We begin with the raw amino-acid sequence, 279 residues long: Energy-coupling factor transporter ATP-binding protein EcfA1 (279 aa).

Positions 6-240 (VEFRNVSFRY…KDALREIGLD (235 aa)) constitute an ABC transporter domain. An ATP-binding site is contributed by 40–47 (GHNGSGKS).

This sequence belongs to the ABC transporter superfamily. Energy-coupling factor EcfA family. As to quaternary structure, forms a stable energy-coupling factor (ECF) transporter complex composed of 2 membrane-embedded substrate-binding proteins (S component), 2 ATP-binding proteins (A component) and 2 transmembrane proteins (T component).

The protein localises to the cell membrane. ATP-binding (A) component of a common energy-coupling factor (ECF) ABC-transporter complex. Unlike classic ABC transporters this ECF transporter provides the energy necessary to transport a number of different substrates. The sequence is that of Energy-coupling factor transporter ATP-binding protein EcfA1 from Oceanobacillus iheyensis (strain DSM 14371 / CIP 107618 / JCM 11309 / KCTC 3954 / HTE831).